Here is a 382-residue protein sequence, read N- to C-terminus: Kelch domain-containing protein 3 (382 aa).

Kelch repeat units lie at residues 25–77 (RVYS…PYMR), 88–138 (TVFL…VLGK), 139–189 (IMYI…TMLG), 191–249 (HMYV…GYNG), and 251–301 (LYIF…IVGD).

As to quaternary structure, component of a CRL2(KLHDC3) complex, also named ECS(KLHDC3) complex, composed of CUL2, Elongin BC (ELOB and ELOC), RBX1 and substrate-specific adapter KLHDC3. May form oligomers as a KLHDC3-ELOB-ELOC complex; this interaction is likely autoinhibitory for the E3 ligase complex. Expressed specifically in testis, particularly in pachytene spermatocytes.

It is found in the cytoplasm. Its pathway is protein modification; protein ubiquitination. Its function is as follows. Substrate-recognition component of a Cul2-RING (CRL2) E3 ubiquitin-protein ligase complex of the DesCEND (destruction via C-end degrons) pathway, which recognizes a C-degron located at the extreme C terminus of target proteins, leading to their ubiquitination and degradation. The C-degron recognized by the DesCEND pathway is usually a motif of less than ten residues and can be present in full-length proteins, truncated proteins or proteolytically cleaved forms. The CRL2(KLHDC3) complex specifically recognizes proteins with a glycine (Gly) at the C-terminus, leading to their ubiquitination and degradation: recognizes the C-terminal -Arg-(Xaa)n-Arg-Gly, -Arg-(Xaa)n-Lys-Gly, and -Arg-(Xaa)n-Gln-Gly degrons. The CRL2(KLHDC3) complex mediates ubiquitination and degradation of truncated SELENOV and SEPHS2 selenoproteins produced by failed UGA/Sec decoding, which end with a glycine. May be involved in meiotic recombination process. This Mus musculus (Mouse) protein is Kelch domain-containing protein 3.